Reading from the N-terminus, the 103-residue chain is Large ribosomal subunit protein uL24 (103 aa).

It belongs to the universal ribosomal protein uL24 family. Part of the 50S ribosomal subunit.

In terms of biological role, one of two assembly initiator proteins, it binds directly to the 5'-end of the 23S rRNA, where it nucleates assembly of the 50S subunit. One of the proteins that surrounds the polypeptide exit tunnel on the outside of the subunit. This chain is Large ribosomal subunit protein uL24, found in Haemophilus influenzae (strain PittEE).